The sequence spans 1199 residues: DNA-directed RNA polymerase subunit beta' (1199 aa).

Residues Cys-60, Cys-62, Cys-75, and Cys-78 each coordinate Zn(2+). Mg(2+) contacts are provided by Asp-449, Asp-451, and Asp-453. 4 residues coordinate Zn(2+): Cys-818, Cys-892, Cys-899, and Cys-902.

The protein belongs to the RNA polymerase beta' chain family. In terms of assembly, the RNAP catalytic core consists of 2 alpha, 1 beta, 1 beta' and 1 omega subunit. When a sigma factor is associated with the core the holoenzyme is formed, which can initiate transcription. Mg(2+) is required as a cofactor. The cofactor is Zn(2+).

It carries out the reaction RNA(n) + a ribonucleoside 5'-triphosphate = RNA(n+1) + diphosphate. Functionally, DNA-dependent RNA polymerase catalyzes the transcription of DNA into RNA using the four ribonucleoside triphosphates as substrates. The polypeptide is DNA-directed RNA polymerase subunit beta' (Bacillus velezensis (strain DSM 23117 / BGSC 10A6 / LMG 26770 / FZB42) (Bacillus amyloliquefaciens subsp. plantarum)).